A 1162-amino-acid polypeptide reads, in one-letter code: MASPLPLLYLCLAALHLAGARDATPTEEHTSTARGLQGRPPDTGQPSPALEDWEEASEWTSWFNVDHPGGDGDFESLAAIRFYYGPARVCPRPLALEARTTDWALPAAMGERVHANPERGFWCLNREQPRGRRCSNYHVRFRCPLEAAWGAWGAWGLCSKSCGLGRRLRRRSCQSSSGDTCPGSPQEAQKCVRSRCPGCSSDTCGCPNHILLGSVVTPSGRPLSGARVSLRTRPGTIATSGTHGTFQVPGVCAGSKASVSAQMNGFSAGTAQAHANSSNTATVTIILEELGKPYLVKHPESRVREAGQNVTFCCKASGTPMPKKYSWFHNGTLLDRRQQGSGPHLELQGLHQAQAGEYHCKAWNEAGTVRSRAALLTILAPGQQACDPRPQEHLIKLPDDCGQPGGGPTYLDVGLCADTRCPGPVGSGPRCGDAGSRCCSVLRLESRDIRCSGYVLPVKVVAECGCRKCLPRRGLVRGRVVAADSGEPLRFARILLGRAPIGFTSYQGDFTIEVPPATERLVVTFVDPSGDFVDSVRVLPFDPRGAGVYHEIRALRKAAAVLLDAERGGEIPLGSTEEAPALGELVLPPGTFHHPDGRPYTGPVEARVTFVDPRDLASASAASSDLRFLDSAGELAPLRTYGMFAVDLRAPGSTEQLHVARADVHVDADHVRMPGHAEALALWSLDPETGLWEEEGSEQGSGGFRRETAAARVRREERAFLVGALTMRERRLFNLDVPERRRCFVKVRAYGTDRFAPAEQVQGVVVTLLNLEPAPGFTANPRAWGRFDSAVTGPNGACVPAFCDAEKPDAYTAFVTAALGGEELEAAPSRPRATAAVVGVAQPYLERLGYQRTDHDDPALKRTGFRLNLARPRAGHESEAHGPVYPWRRLRDCEDAPVTDSHFRFSRVEADKYEYDVVPFHEGAPASWTGDLLAWWPNPQEFRACFLKVRLQGPQEYMVRSHNAGGTHEATRGRLYGLRDTRSVRHPERPGASAACVEFKCGGMLFDQRQVDRTLVTVTPQGSCRRVAVNTLLQDYLARHPPLAAADDPAAFAMLAPLDALGHNYGVYTVTDQSPRLAKEIAIGRCFDGSSDGFSREMKADAGTAVTFQCREPPARPSLFQRLLENPSSALGDIRREMGQATRYSRVNQTQAGDTGPFGPGQ.

Positions 1–20 are cleaved as a signal peptide; that stretch reads MASPLPLLYLCLAALHLAGA. The disordered stretch occupies residues 23–51; that stretch reads ATPTEEHTSTARGLQGRPPDTGQPSPALE. Residues 146–197 form the TSP type-1 domain; sequence EAAWGAWGAWGLCSKSCGLGRRLRRRSCQSSSGDTCPGSPQEAQKCVRSRCP. 4 cysteine pairs are disulfide-bonded: cysteine 158–cysteine 191, cysteine 162–cysteine 196, cysteine 173–cysteine 181, and cysteine 314–cysteine 360. Positions 293-377 constitute an Ig-like C2-type domain; the sequence is PYLVKHPESR…TVRSRAALLT (85 aa). Residue asparagine 330 is glycosylated (N-linked (GlcNAc...) asparagine).

In terms of processing, may be cleaved into 2 chains possibly by a furin-like protease upon or preceding secretion. N-glycosylated. As to expression, expressed in articulated and meniscal cartilage (at protein level). Also detected in heart, skeletal muscle and brain. Not detected in growth plate cartilage.

Its subcellular location is the secreted. It localises to the extracellular space. The protein localises to the extracellular matrix. In terms of biological role, may play a role in cartilage scaffolding. This chain is Cartilage intermediate layer protein 2, found in Mus musculus (Mouse).